The chain runs to 208 residues: Pyridoxine/pyridoxamine 5'-phosphate oxidase (208 aa).

Residues 53 to 58 (RTVLLK), 68 to 69 (YS), Lys75, and Gln100 each bind FMN. A substrate-binding site is contributed by Lys58. Residues Tyr118, Arg122, and Ser126 each contribute to the substrate site. FMN contacts are provided by residues 135 to 136 (QS) and Trp180. 186–188 (RLH) serves as a coordination point for substrate. FMN is bound at residue Arg190.

It belongs to the pyridoxamine 5'-phosphate oxidase family. As to quaternary structure, homodimer. Requires FMN as cofactor.

It catalyses the reaction pyridoxamine 5'-phosphate + O2 + H2O = pyridoxal 5'-phosphate + H2O2 + NH4(+). The enzyme catalyses pyridoxine 5'-phosphate + O2 = pyridoxal 5'-phosphate + H2O2. Its pathway is cofactor metabolism; pyridoxal 5'-phosphate salvage; pyridoxal 5'-phosphate from pyridoxamine 5'-phosphate: step 1/1. It functions in the pathway cofactor metabolism; pyridoxal 5'-phosphate salvage; pyridoxal 5'-phosphate from pyridoxine 5'-phosphate: step 1/1. Catalyzes the oxidation of either pyridoxine 5'-phosphate (PNP) or pyridoxamine 5'-phosphate (PMP) into pyridoxal 5'-phosphate (PLP). The protein is Pyridoxine/pyridoxamine 5'-phosphate oxidase of Xylella fastidiosa (strain Temecula1 / ATCC 700964).